Consider the following 642-residue polypeptide: Threonine--tRNA ligase (642 aa).

The 61-residue stretch at 1–61 (MPVITLPDGS…ENDTQLSIIT (61 aa)) folds into the TGS domain. A catalytic region spans residues 243-534 (DHRKIGKQLD…LTEEFAGFFP (292 aa)). K286 carries the post-translational modification N6-acetyllysine. C334, H385, and H511 together coordinate Zn(2+).

This sequence belongs to the class-II aminoacyl-tRNA synthetase family. As to quaternary structure, homodimer. Zn(2+) is required as a cofactor.

The protein resides in the cytoplasm. It catalyses the reaction tRNA(Thr) + L-threonine + ATP = L-threonyl-tRNA(Thr) + AMP + diphosphate + H(+). Its function is as follows. Catalyzes the attachment of threonine to tRNA(Thr) in a two-step reaction: L-threonine is first activated by ATP to form Thr-AMP and then transferred to the acceptor end of tRNA(Thr). Also edits incorrectly charged L-seryl-tRNA(Thr). The protein is Threonine--tRNA ligase of Shigella dysenteriae serotype 1 (strain Sd197).